Consider the following 276-residue polypeptide: Putative translation initiation factor eIF-2B subunit 2-like (276 aa).

Belongs to the eIF-2B alpha/beta/delta subunits family. As to quaternary structure, complex of two different subunits.

In terms of biological role, catalyzes the exchange of initiation factor 2-bound GDP for GTP. This chain is Putative translation initiation factor eIF-2B subunit 2-like, found in Pyrococcus horikoshii (strain ATCC 700860 / DSM 12428 / JCM 9974 / NBRC 100139 / OT-3).